Consider the following 383-residue polypeptide: tRNA(Met) cytidine acetate ligase (383 aa).

Residues 7-20 (IAEF…HEFL), Gly-101, Asn-153, and 178-179 (RI) each bind ATP.

This sequence belongs to the TmcAL family.

Its subcellular location is the cytoplasm. The catalysed reaction is cytidine(34) in elongator tRNA(Met) + acetate + ATP = N(4)-acetylcytidine(34) in elongator tRNA(Met) + AMP + diphosphate. In terms of biological role, catalyzes the formation of N(4)-acetylcytidine (ac(4)C) at the wobble position of elongator tRNA(Met), using acetate and ATP as substrates. First activates an acetate ion to form acetyladenylate (Ac-AMP) and then transfers the acetyl group to tRNA to form ac(4)C34. This Lactobacillus helveticus (strain DPC 4571) protein is tRNA(Met) cytidine acetate ligase.